A 711-amino-acid chain; its full sequence is DNA ligase (711 aa).

NAD(+) contacts are provided by residues 39–43 (DAEYD), 88–89 (SL), and Glu-119. Catalysis depends on Lys-121, which acts as the N6-AMP-lysine intermediate. Residues Arg-142, Glu-179, Lys-295, and Lys-319 each coordinate NAD(+). Zn(2+)-binding residues include Cys-416, Cys-419, Cys-434, and Cys-440. One can recognise a BRCT domain in the interval 630–711 (ESVSSLAGRA…LRELLAGAGA (82 aa)).

It belongs to the NAD-dependent DNA ligase family. LigA subfamily. Mg(2+) is required as a cofactor. It depends on Mn(2+) as a cofactor.

It carries out the reaction NAD(+) + (deoxyribonucleotide)n-3'-hydroxyl + 5'-phospho-(deoxyribonucleotide)m = (deoxyribonucleotide)n+m + AMP + beta-nicotinamide D-nucleotide.. Functionally, DNA ligase that catalyzes the formation of phosphodiester linkages between 5'-phosphoryl and 3'-hydroxyl groups in double-stranded DNA using NAD as a coenzyme and as the energy source for the reaction. It is essential for DNA replication and repair of damaged DNA. This is DNA ligase from Halorhodospira halophila (strain DSM 244 / SL1) (Ectothiorhodospira halophila (strain DSM 244 / SL1)).